We begin with the raw amino-acid sequence, 412 residues long: MKIGYACTPITTNARTNRRILLKDFSKDKFLSITKQNLDDLQKILEWNIKNNIYLFRIGSDIIPLGSHEINNISWQKEFKDKLETIGTFIKNNKIRVSMHPGQYTVINTPKEDVLYKSIKDIEYHCEFLDSLKVDYKNKIILHIGGVYGDKKLAKENFLKGFKKLSDSSKKRLVIENDERNFSLDDVLDISSKLNIPVIFDNLHNICYGDNSYSLKEIYSLVIKTWNKELDGNMKVHYSEQDIFKKKGSHSPSISINSFLEYYEEIKEFSPDIMLEVKDKDISAIKCINSLKEINKTLNSKAYREEIENYKLLLLQHDKDFQKKLNSFSKDLIEFYNYLDKLLLSPKDIIGFKYSLELAFNILKDRISNRESLYFKKLINEKEYEKAKVYLTKLVKKIEFPPKELSYYISQS.

Belongs to the uve1/UvsE family.

Component in a DNA repair pathway. Removal of UV LIGHT damaged nucleotides. Recognizes pyrimidine dimers and cleave a phosphodiester bond immediately 5' to the lesion. This chain is UV DNA damage endonuclease, found in Clostridium perfringens (strain 13 / Type A).